Reading from the N-terminus, the 285-residue chain is Inhibitor of growth protein 5 (285 aa).

The tract at residues 116–225 (EKASSTRAKS…ATHPSDVMDM (110 aa)) is disordered. Basic residues predominate over residues 131–149 (KKGRKKTKDSKTTGKKKKS). The segment covering 160–178 (NNQSNANSSVNSSSNAGQG) has biased composition (low complexity). A PHD-type zinc finger spans residues 232-281 (PTYCLCHQVSYGEMIGCDNPDCPIEWFHFACVGLTTKPKGKWFCPKCTQD). Cys235, Cys237, Cys248, Cys253, His259, Cys262, Cys275, and Cys278 together coordinate Zn(2+).

It belongs to the ING family. Component of the Enok complex composed of at least Br140, enok, Eaf6 and Ing5.

The protein localises to the nucleus. It localises to the chromosome. In terms of biological role, component of the Enok complex which has a histone H3 acetyltransferase activity. This is Inhibitor of growth protein 5 from Drosophila melanogaster (Fruit fly).